Consider the following 183-residue polypeptide: Secreted RxLR effector protein 41 (183 aa).

Positions 1 to 18 (MLGFVTGVLAISAHVIVS) are cleaved as a signal peptide. The short motif at 41–65 (RRLRSYETDTASARAEEGTSDIEER) is the RxLR-dEER element. N88 carries an N-linked (GlcNAc...) asparagine glycan.

This sequence belongs to the RxLR effector family.

The protein resides in the secreted. The protein localises to the host nucleus. It localises to the host cytoplasm. Functionally, secreted effector that dos not suppress the host cell death induced by cell death-inducing proteins. The polypeptide is Secreted RxLR effector protein 41 (Plasmopara viticola (Downy mildew of grapevine)).